Consider the following 327-residue polypeptide: Thiamine-binding periplasmic protein (327 aa).

The N-terminal stretch at 1 to 18 is a signal peptide; the sequence is MLKKCLPLLLLCTAPVFA. Thiamine contacts are provided by residues 59–60, 161–162, Trp-197, and 215–218; these read DG, ST, and YTTS.

This sequence belongs to the bacterial solute-binding protein 1 family. Monomer in solution. The complex is composed of two ATP-binding proteins (ThiQ), two transmembrane proteins (ThiP) and a solute-binding protein (ThiB).

It is found in the periplasm. With respect to regulation, transport is inhibited by the sulfhydryl-specific modifier N-ethylmaleimide. Part of the ABC transporter complex ThiBPQ involved in thiamine import. Binds thiamine, thiamine phosphate and thiamine diphosphate with high affinity. This Escherichia coli (strain K12) protein is Thiamine-binding periplasmic protein (thiB).